The sequence spans 363 residues: Methyltransferase pynC (363 aa).

S-adenosyl-L-methionine contacts are provided by residues 199–200 (GG), D225, 254–255 (SF), R270, and R271.

This sequence belongs to the class I-like SAM-binding methyltransferase superfamily. Cation-independent O-methyltransferase family.

Its pathway is secondary metabolite biosynthesis. In terms of biological role, methyltransferase; part of the gene cluster that mediates the biosynthesis of pyranonigrins, a family of antioxidative compounds. The first step of pyranonigrins biosynthesis is performed by the hybrid PKS-NRPS synthetase that condenses 6 malonyl-CoA units to an acetyl starter unit, to form a 1,3,5-trioxotetradecane-6,8-dienyl-ACP. The enoyl reductase (ER) domain of pynA is likely to be functional during the first two rounds of polyketide chain extension, to generate the saturated C-C bonds of the alkyl side chain. PynA subsequently forms the amide bond between the acyl chain and L-serine. Although pynA has a terminal reductase domain, it appears to require the thioesterase pynI for the release of the straight-chain intermediate from pynA via the formation of a tetramic acid pyranonigrin J. The methyltransferase pynC then coverts pyranonigrin J to pyranonigrin I via N-methylation. The FAD-dependent monooxygenase pynG catalyzes an epoxidation-mediated cyclization to form the dihydro-gamma-pyrone moiety, followed by pynD-catalyzed oxidation of the alcohol to the ketone and enolization to yield the characteristic tetramic acid-fused gamma-pyrone core of pyranonigrin H. Pyranonigrin H is substrate of pynH for dehydration-mediated exo-methylene formation from the serine side chain to produce pyranonigrin E, before the oxidase pynE reduces the exo-methylene of pyranonigrin E into a pendant methyl to form pyranonigrin G. The FAD-linked oxidoreductase pynB performs the reverse reaction and converts pyranonigrin G back to pyranonigrin E. This chain is Methyltransferase pynC, found in Aspergillus niger (strain ATCC MYA-4892 / CBS 513.88 / FGSC A1513).